The chain runs to 520 residues: FNIP repeat-containing protein DDB_G0274063/DDB_G0272642 (520 aa).

2 disordered regions span residues 47 to 86 (QQQS…IDNR) and 100 to 121 (NISS…SSSS). A compositionally biased stretch (low complexity) spans 51–84 (NNNNNNNNNNNNNNNNNNFINFSNHTNNINNNID). FNIP repeat units lie at residues 242–285 (YNNN…FGES), 286–331 (FNQD…FGLS), 332–406 (YNQP…FGVQ), and 453–496 (FNQQ…FHNS).

This chain is FNIP repeat-containing protein DDB_G0274063/DDB_G0272642, found in Dictyostelium discoideum (Social amoeba).